We begin with the raw amino-acid sequence, 500 residues long: MPVLLPSTDRDQDSRVGAPEWHQAAKATSRKAHLLTDRCGKEAVTMWQPKDSVLDPNVAHHLGRAAYMEPWRFRVEMLKGGGTVEKPPPGEGVTLWKGKMKPPAWYARLPLPMHRDARAQQTAEVVHAHARGARLTAARLGRAQHQINGQLRLLLRQREATDRRLSEVRKGLLINEQSVKLRGYRPKCEKIPDKADSMLVWEREELKSMKRKMEKDMERSEALLKALASCRDTLDFYCQERLQAVGLMNQPLDKVLEQAGRHSWVDITRPPTPRTQGLKTPPPDPVGAYTPACAKALFEAKRLLMESKDILAELAKNEVDIQNQQQEISDRVCNSLAQKMRETLELKERMTMTLGLMRGTIHRCMKFNQEMYVTRGLIKGPLLKRDLEAREKLNRPLVRMYQRHVGTQLPEATRLAQGTDLLTRHNLQMEKNLKELRTTHDNLAWSLNCKKIGHDVDYDVVRLRLRQLHPHVCYEQAKRLINDWDPRTPPPCSRTNTSSK.

The interval 1-25 is disordered; the sequence is MPVLLPSTDRDQDSRVGAPEWHQAA. Ser14 is subject to Phosphoserine. Positions 198 to 229 form a coiled coil; sequence MLVWEREELKSMKRKMEKDMERSEALLKALAS. A disordered region spans residues 265-286; the sequence is VDITRPPTPRTQGLKTPPPDPV. Tyr372 is subject to Phosphotyrosine. Residues 422-448 are a coiled coil; it reads LTRHNLQMEKNLKELRTTHDNLAWSLN.

Microtubule inner protein component of sperm flagellar doublet microtubules.

Its subcellular location is the cytoplasm. It is found in the cytoskeleton. The protein resides in the flagellum axoneme. Its function is as follows. Microtubule inner protein (MIP) part of the dynein-decorated doublet microtubules (DMTs) in sperm flagellar axoneme, which is required for motile flagellum beating. Forms an extensive interaction network cross-linking the lumen of axonemal doublet microtubules. The sequence is that of Tektin-like protein 1 from Rattus norvegicus (Rat).